Here is a 396-residue protein sequence, read N- to C-terminus: Purine ribonucleoside efflux pump NepI (396 aa).

At 1–21 (MSEFIAENRGANAITRPNWSA) the chain is on the cytoplasmic side. Residues 22-42 (VFSVAFCVACLIIVEFLPVSL) traverse the membrane as a helical segment. Residues 43 to 54 (LTPMAQDLGISE) are Periplasmic-facing. Residues 55–75 (GVAGQSVTVTAFVAMFASLFI) form a helical membrane-spanning segment. At 76-85 (TQTIQATDRR) the chain is on the cytoplasmic side. Residues 86–106 (YVVILFAVLLTLSCLLVSFAN) form a helical membrane-spanning segment. Ser-107 is a topological domain (periplasmic). The chain crosses the membrane as a helical span at residues 108–128 (FSLLLIGRACLGLALGGFWAM). Residues 129–147 (SASLTMRLVPPRTVPKALS) lie on the Cytoplasmic side of the membrane. A helical membrane pass occupies residues 148 to 168 (VIFGAVSIALVIAAPLGSFLG). Residues 169 to 175 (ELIGWRN) lie on the Periplasmic side of the membrane. A helical transmembrane segment spans residues 176–196 (VFNAAAAMGVLCIFWIIKSLP). Residues 197–215 (SLPGEPSHQKQNTFRLLQR) lie on the Cytoplasmic side of the membrane. A helical membrane pass occupies residues 216 to 236 (PGVMAGMIAIFMSFAGQFAFF). At 237 to 255 (TYIRPVYMNLAGFGVDGLT) the chain is on the periplasmic side. A helical transmembrane segment spans residues 256 to 276 (LVLLSFGIASFVGTSLSSFIL). Over 277-281 (KRSVK) the chain is Cytoplasmic. The helical transmembrane segment at 282-302 (LALAGAPFVLALSALVLTLWG) threads the bilayer. The Periplasmic portion of the chain corresponds to 303 to 305 (SYK). A helical transmembrane segment spans residues 306-326 (IVATGVAIIWGLTFALIPVGW). Residues 327-343 (STWITRSLADQAEKAGS) lie on the Cytoplasmic side of the membrane. Residues 344–364 (IQVAVIQLANTCGAAIGGYAL) form a helical membrane-spanning segment. The Periplasmic portion of the chain corresponds to 365 to 366 (DN). A helical transmembrane segment spans residues 367 to 387 (IGLTSPLMLSGTLMLLTALLV). Residues 388 to 396 (TAKVKMKKS) are Cytoplasmic-facing.

This sequence belongs to the major facilitator superfamily. DHA1 family. NepI (TC 2.A.1.2.26) subfamily.

The protein resides in the cell inner membrane. It catalyses the reaction inosine(in) + H(+)(out) = inosine(out) + H(+)(in). It carries out the reaction guanosine(in) + H(+)(out) = guanosine(out) + H(+)(in). In terms of biological role, involved in the efflux of purine ribonucleosides, such as inosine and guanosine. The polypeptide is Purine ribonucleoside efflux pump NepI (Escherichia coli O6:H1 (strain CFT073 / ATCC 700928 / UPEC)).